We begin with the raw amino-acid sequence, 208 residues long: 3-demethoxyubiquinol 3-hydroxylase (208 aa).

Residues glutamate 57, glutamate 87, histidine 90, glutamate 139, glutamate 171, and histidine 174 each contribute to the Fe cation site.

This sequence belongs to the COQ7 family. Fe cation is required as a cofactor.

It localises to the cell membrane. It carries out the reaction a 5-methoxy-2-methyl-3-(all-trans-polyprenyl)benzene-1,4-diol + AH2 + O2 = a 3-demethylubiquinol + A + H2O. Its pathway is cofactor biosynthesis; ubiquinone biosynthesis. Catalyzes the hydroxylation of 2-nonaprenyl-3-methyl-6-methoxy-1,4-benzoquinol during ubiquinone biosynthesis. The polypeptide is 3-demethoxyubiquinol 3-hydroxylase (Burkholderia lata (strain ATCC 17760 / DSM 23089 / LMG 22485 / NCIMB 9086 / R18194 / 383)).